We begin with the raw amino-acid sequence, 167 residues long: Kininogen-1 (167 aa).

A signal peptide spans 1–23 (MRLWFCLSFFIILCLEHFPGTLA).

This sequence belongs to the bradykinin-related peptide family. In terms of tissue distribution, expressed by the skin glands.

The protein resides in the secreted. Its function is as follows. Vasodilator. Bradykinin produces in vitro relaxation of rat arterial smooth muscle and constriction of intestinal smooth muscle. May target bradykinin receptors (BDKRB). The polypeptide is Kininogen-1 (Bombina orientalis (Oriental fire-bellied toad)).